Here is a 289-residue protein sequence, read N- to C-terminus: Formamidopyrimidine-DNA glycosylase 1 (289 aa).

The active-site Schiff-base intermediate with DNA is the Pro-2. Glu-3 (proton donor) is an active-site residue. The active-site Proton donor; for beta-elimination activity is the Lys-61. Positions 100, 119, and 165 each coordinate DNA. An FPG-type zinc finger spans residues 251-285; it reads DAYGREGENCRRCGAVIRRERFMNRSSFYCPRCQP. Arg-275 serves as the catalytic Proton donor; for delta-elimination activity.

This sequence belongs to the FPG family. As to quaternary structure, monomer. Zn(2+) serves as cofactor.

It carries out the reaction Hydrolysis of DNA containing ring-opened 7-methylguanine residues, releasing 2,6-diamino-4-hydroxy-5-(N-methyl)formamidopyrimidine.. It catalyses the reaction 2'-deoxyribonucleotide-(2'-deoxyribose 5'-phosphate)-2'-deoxyribonucleotide-DNA = a 3'-end 2'-deoxyribonucleotide-(2,3-dehydro-2,3-deoxyribose 5'-phosphate)-DNA + a 5'-end 5'-phospho-2'-deoxyribonucleoside-DNA + H(+). Its function is as follows. Involved in base excision repair of DNA damaged by oxidation or by mutagenic agents. Acts as a DNA glycosylase that recognizes and removes damaged bases. Has a preference for oxidized purines, such as 7,8-dihydro-8-oxoguanine (8-oxoG) when paired with C, G or T, as well as methyl-faPy (formanidopyrimidine residues) in poly(dG-dC) and spiroiminodihydantoin:C base pairs. Unlike its E.coli ortholog has no activity on 8-oxoG:A. Has AP (apurinic/apyrimidinic) lyase activity and introduces nicks in the DNA strand. Cleaves the DNA backbone by beta-delta elimination to generate a single-strand break at the site of the removed base with both 3'- and 5'-phosphates. Cleaves ssDNA containing an AP site. Complements the H(2)O(2) sensitivity of an M.smegmatis fpg disruption mutant; upon expression in M.smegmatis excises 8-oxoG from dsDNA. The chain is Formamidopyrimidine-DNA glycosylase 1 (fpg1) from Mycobacterium tuberculosis (strain ATCC 25618 / H37Rv).